Reading from the N-terminus, the 1351-residue chain is Bromodomain-containing protein 4A (1351 aa).

7 disordered regions span residues Met-1–Gly-23, Pro-35–Arg-58, Glu-168–Ala-244, Ala-285–Thr-368, Glu-478–Tyr-638, Cys-700–Ser-799, and Pro-821–Asp-1334. The region spanning Arg-58–Met-164 is the Bromo 1 domain. Positions Val-208–Ser-219 are enriched in low complexity. Positions Thr-220–Thr-235 are enriched in pro residues. The segment covering Pro-327–Val-343 has biased composition (basic and acidic residues). Positions Pro-349–Ala-359 are enriched in pro residues. Residues Thr-366–Met-475 form the Bromo 2 domain. The segment covering Ala-482–Thr-504 has biased composition (pro residues). Residues Thr-504 to Ser-522 form an NPS region region. Low complexity predominate over residues Ser-505 to Glu-517. Residues Gln-543–Gly-598 form a BID region region. Residues Lys-554–Arg-569 show a composition bias toward basic residues. Positions Lys-570–Ala-586 are enriched in basic and acidic residues. Positions Pro-607–Ala-621 are enriched in pro residues. An NET domain is found at Glu-624–Gln-708. Residues Glu-629–Tyr-638 show a composition bias toward basic and acidic residues. A compositionally biased stretch (low complexity) spans Ser-725–Ser-738. Positions Gln-751–Pro-767 are enriched in basic residues. The segment covering Pro-788–Ser-799 has biased composition (low complexity). Residues Pro-872–Gln-890 show a composition bias toward pro residues. Positions His-892–Gln-902 are enriched in basic residues. Residues Leu-927 to Pro-953 are compositionally biased toward polar residues. Residues Val-968–Ala-983 show a composition bias toward pro residues. Composition is skewed to low complexity over residues Pro-994–Gly-1003 and Gln-1011–Gln-1028. The tract at residues Arg-1051 to Phe-1350 is C-terminal (CTD) region. Residues Pro-1075–Pro-1089 show a composition bias toward pro residues. Basic and acidic residues-rich tracts occupy residues Pro-1150–Arg-1161 and Pro-1176–Ile-1197. Residues Pro-1214 to Ser-1224 show a composition bias toward polar residues. Positions Glu-1226–Glu-1284 are enriched in basic and acidic residues. The span at Ser-1301–Met-1310 shows a compositional bias: low complexity. Positions Asp-1311 to Arg-1323 are enriched in basic and acidic residues.

It belongs to the BET family.

It localises to the nucleus. Its subcellular location is the chromosome. Chromatin reader protein that recognizes and binds acetylated histones and plays a key role in transmission of epigenetic memory across cell divisions and transcription regulation. Remains associated with acetylated chromatin throughout the entire cell cycle and provides epigenetic memory for postmitotic G1 gene transcription by preserving acetylated chromatin status and maintaining high-order chromatin structure. During interphase, plays a key role in regulating the transcription of signal-inducible genes by associating with the P-TEFb complex and recruiting it to promoters. The chain is Bromodomain-containing protein 4A (brd4-a) from Xenopus laevis (African clawed frog).